The chain runs to 602 residues: ATP-dependent RNA helicase DeaD (602 aa).

The short motif at 6 to 34 (MTFSSFGLNSCIITALNDIGYVQPSPIQA) is the Q motif element. In terms of domain architecture, Helicase ATP-binding spans 37-208 (IPYLIKGKDV…RRFMKNPKEI (172 aa)). 50-57 (AQTGSGKT) is a binding site for ATP. The DEAD box signature appears at 156 to 159 (DEAD). A Helicase C-terminal domain is found at 231 to 378 (KTDALIRFLE…EVNLPKSDFL (148 aa)).

This sequence belongs to the DEAD box helicase family. DeaD/CsdA subfamily.

It is found in the cytoplasm. It catalyses the reaction ATP + H2O = ADP + phosphate + H(+). Functionally, DEAD-box RNA helicase involved in various cellular processes at low temperature, including ribosome biogenesis, mRNA degradation and translation initiation. The protein is ATP-dependent RNA helicase DeaD of Buchnera aphidicola subsp. Baizongia pistaciae (strain Bp).